Here is a 398-residue protein sequence, read N- to C-terminus: Protein RecA (398 aa).

83-90 contacts ATP; that stretch reads GPESSGKT. Positions 351–398 are disordered; sequence AGQKNDKKSKLEEKANAGAGISEASEPDSSAEEDFEEFAPIDIGSLGE. A compositionally biased stretch (basic and acidic residues) spans 354 to 365; it reads KNDKKSKLEEKA. The segment covering 375–389 has biased composition (acidic residues); that stretch reads SEPDSSAEEDFEEFA.

It belongs to the RecA family.

It localises to the cytoplasm. In terms of biological role, can catalyze the hydrolysis of ATP in the presence of single-stranded DNA, the ATP-dependent uptake of single-stranded DNA by duplex DNA, and the ATP-dependent hybridization of homologous single-stranded DNAs. It interacts with LexA causing its activation and leading to its autocatalytic cleavage. This is Protein RecA from Ruminococcus albus (strain ATCC 27210 / DSM 20455 / JCM 14654 / NCDO 2250 / 7).